Reading from the N-terminus, the 118-residue chain is Putative pterin-4-alpha-carbinolamine dehydratase (118 aa).

It belongs to the pterin-4-alpha-carbinolamine dehydratase family.

It catalyses the reaction (4aS,6R)-4a-hydroxy-L-erythro-5,6,7,8-tetrahydrobiopterin = (6R)-L-erythro-6,7-dihydrobiopterin + H2O. This is Putative pterin-4-alpha-carbinolamine dehydratase from Xanthomonas oryzae pv. oryzae (strain MAFF 311018).